Reading from the N-terminus, the 252-residue chain is Cell division protein ZapD (252 aa).

The protein belongs to the ZapD family. In terms of assembly, interacts with FtsZ.

The protein localises to the cytoplasm. Cell division factor that enhances FtsZ-ring assembly. Directly interacts with FtsZ and promotes bundling of FtsZ protofilaments, with a reduction in FtsZ GTPase activity. This is Cell division protein ZapD from Dechloromonas aromatica (strain RCB).